Consider the following 106-residue polypeptide: UPF0145 protein TM_0763 (106 aa).

This sequence belongs to the UPF0145 family.

The protein is UPF0145 protein TM_0763 of Thermotoga maritima (strain ATCC 43589 / DSM 3109 / JCM 10099 / NBRC 100826 / MSB8).